Reading from the N-terminus, the 182-residue chain is Large ribosomal subunit protein uL5c (182 aa).

This sequence belongs to the universal ribosomal protein uL5 family. Part of the 50S ribosomal subunit; contacts the 5S rRNA.

It is found in the plastid. The protein resides in the chloroplast. Binds 5S rRNA, forms part of the central protuberance of the 50S subunit. The polypeptide is Large ribosomal subunit protein uL5c (rpl5) (Cyanidium caldarium (Red alga)).